The primary structure comprises 232 residues: 5'-methylthioadenosine/S-adenosylhomocysteine nucleosidase (232 aa).

Glutamate 12 serves as the catalytic Proton acceptor. Substrate is bound by residues glycine 78, isoleucine 152, and 173–174 (ME). The Proton donor role is filled by aspartate 197.

It belongs to the PNP/UDP phosphorylase family. MtnN subfamily. Homodimer.

It catalyses the reaction S-adenosyl-L-homocysteine + H2O = S-(5-deoxy-D-ribos-5-yl)-L-homocysteine + adenine. It carries out the reaction S-methyl-5'-thioadenosine + H2O = 5-(methylsulfanyl)-D-ribose + adenine. The enzyme catalyses 5'-deoxyadenosine + H2O = 5-deoxy-D-ribose + adenine. It functions in the pathway amino-acid biosynthesis; L-methionine biosynthesis via salvage pathway; S-methyl-5-thio-alpha-D-ribose 1-phosphate from S-methyl-5'-thioadenosine (hydrolase route): step 1/2. Catalyzes the irreversible cleavage of the glycosidic bond in both 5'-methylthioadenosine (MTA) and S-adenosylhomocysteine (SAH/AdoHcy) to adenine and the corresponding thioribose, 5'-methylthioribose and S-ribosylhomocysteine, respectively. Also cleaves 5'-deoxyadenosine, a toxic by-product of radical S-adenosylmethionine (SAM) enzymes, into 5-deoxyribose and adenine. Thus, is required for in vivo function of the radical SAM enzymes biotin synthase and lipoic acid synthase, that are inhibited by 5'-deoxyadenosine accumulation. The polypeptide is 5'-methylthioadenosine/S-adenosylhomocysteine nucleosidase (Edwardsiella ictaluri (strain 93-146)).